The following is a 262-amino-acid chain: MAWLEDVDFLEDVPLLEDIPLLEDVPLLEDVPLLEDTSRLEDINLMEDMALLEDVDLLEDTDFLEDLDFSEAMDLREDKDFLEDMDSLEDMALLEDVDLLEDTDFLEDPDFLEAIDLREDKDFLEDMDSLEDLEAIGRCGFSGRHGFFGRRRFSGRPKLSGRLGLLGRRGFSGRLGGYWKTWIFWKTWIFWKTWIFRKTYIGWKTWIFSGRCGLTGRPGFGGRRRFFWKTLTDWKTWISFWKTLIDWKTWISFWKTLIDWKI.

Repeat copies occupy residues 3–8 (WLEDVD), 9–14 (FLEDVP), 15–20 (LLEDIP), 21–26 (LLEDVP), 27–32 (LLEDVP), 33–38 (LLEDTS), 39–44 (RLEDIN), 45–50 (LMEDMA), 51–56 (LLEDVD), 57–62 (LLEDTD), 63–68 (FLEDLD), 69–74 (FSEAMD), 75–80 (LREDKD), 81–86 (FLEDMD), 87–92 (SLEDMA), 93–98 (LLEDVD), 99–104 (LLEDTD), 105–110 (FLEDPD), 111–116 (FLEAID), 117–122 (LREDKD), 123–128 (FLEDMD), 129–134 (SLEDLE), 135–140 (AIGRCG), 141–146 (FSGRHG), 147–152 (FFGRRR), 153–158 (FSGRPK), 159–164 (LSGRLG), 165–170 (LLGRRG), 171–176 (FSGRLG), 177–182 (GYWKTW), 183–188 (IFWKTW), 189–194 (IFWKTW), 195–200 (IFRKTY), and 201–206 (IGWKTW). The 23 X 6 AA approximate repeats stretch occupies residues 3–140 (WLEDVDFLED…EDLEAIGRCG (138 aa)). The 6 X 6 AA approximate repeats stretch occupies residues 141–176 (FSGRHGFFGRRRFSGRPKLSGRLGLLGRRGFSGRLG). Residues 177-206 (GYWKTWIFWKTWIFWKTWIFRKTYIGWKTW) are 5 X 6 AA approximate repeats.

As to expression, brain; predominantly expressed in normal neuroectodermal tissues and in certain malignant tumors.

The chain is Cerebellar degeneration-related antigen 1 (CDR1) from Homo sapiens (Human).